The following is a 221-amino-acid chain: Probable septum site-determining protein MinC (221 aa).

This sequence belongs to the MinC family. As to quaternary structure, interacts with MinD and FtsZ.

Cell division inhibitor that blocks the formation of polar Z ring septums. Rapidly oscillates between the poles of the cell to destabilize FtsZ filaments that have formed before they mature into polar Z rings. Prevents FtsZ polymerization. The polypeptide is Probable septum site-determining protein MinC (Shewanella loihica (strain ATCC BAA-1088 / PV-4)).